The primary structure comprises 691 residues: Mediator of RNA polymerase II transcription subunit 17 (691 aa).

Residues 158–185 (KLESFDAAANKLLQSAQRLEEDIAAETK) are a coiled coil.

The protein belongs to the Mediator complex subunit 17 family. As to quaternary structure, component of the Mediator complex.

It is found in the nucleus. Component of the Mediator complex, a coactivator involved in the regulated transcription of nearly all RNA polymerase II-dependent genes. Mediator functions as a bridge to convey information from gene-specific regulatory proteins to the basal RNA polymerase II transcription machinery. Mediator is recruited to promoters by direct interactions with regulatory proteins and serves as a scaffold for the assembly of a functional preinitiation complex with RNA polymerase II and the general transcription factors. The protein is Mediator of RNA polymerase II transcription subunit 17 (SRB4) of Coccidioides immitis (strain RS) (Valley fever fungus).